We begin with the raw amino-acid sequence, 446 residues long: Tubulin beta-1 chain (446 aa).

Positions 11, 69, 138, 142, 143, 144, 204, and 226 each coordinate GTP. Position 69 (Glu-69) interacts with Mg(2+). The segment at 422–446 is disordered; that stretch reads YQQYQDATADEEGEYEDEEEGDLQD. Over residues 429–446 the composition is skewed to acidic residues; that stretch reads TADEEGEYEDEEEGDLQD.

The protein belongs to the tubulin family. In terms of assembly, dimer of alpha and beta chains. A typical microtubule is a hollow water-filled tube with an outer diameter of 25 nm and an inner diameter of 15 nM. Alpha-beta heterodimers associate head-to-tail to form protofilaments running lengthwise along the microtubule wall with the beta-tubulin subunit facing the microtubule plus end conferring a structural polarity. Microtubules usually have 13 protofilaments but different protofilament numbers can be found in some organisms and specialized cells. It depends on Mg(2+) as a cofactor. As to expression, found in areas of rapidly dividing tissues.

It localises to the cytoplasm. The protein localises to the cytoskeleton. Tubulin is the major constituent of microtubules, a cylinder consisting of laterally associated linear protofilaments composed of alpha- and beta-tubulin heterodimers. Microtubules grow by the addition of GTP-tubulin dimers to the microtubule end, where a stabilizing cap forms. Below the cap, tubulin dimers are in GDP-bound state, owing to GTPase activity of alpha-tubulin. This is Tubulin beta-1 chain (TUBB1) from Zea mays (Maize).